The sequence spans 796 residues: Protein SEY1 homolog (796 aa).

Over methionine 1 to asparagine 701 the chain is Cytoplasmic. The GB1/RHD3-type G domain occupies glycine 46–serine 280. Glycine 56–serine 63 lines the GTP pocket. Positions serine 554–lysine 626 form a coiled coil. Residues isoleucine 702–phenylalanine 722 form a helical membrane-spanning segment. Over lysine 723–leucine 725 the chain is Lumenal. The helical transmembrane segment at leucine 726–alanine 746 threads the bilayer. Topologically, residues threonine 747–threonine 796 are cytoplasmic.

The protein belongs to the TRAFAC class dynamin-like GTPase superfamily. GB1/RHD3 GTPase family. RHD3 subfamily.

The protein resides in the endoplasmic reticulum membrane. Its function is as follows. Probable GTP-binding protein that may be involved in cell development. In Theileria parva (East coast fever infection agent), this protein is Protein SEY1 homolog.